The primary structure comprises 293 residues: Deubiquitinase OTUD6B (293 aa).

M1 is modified (N-acetylmethionine). Residues L147–L284 form the OTU domain. The tract at residues I152–C158 is cys-loop. D155 is an active-site residue. The Nucleophile role is filled by C158. The tract at residues I219 to L229 is variable-loop. A his-loop region spans residues Y267–H277. The active site involves H277.

Interacts with the eukaryotic translation initiation factor 4F complex.

The enzyme catalyses Thiol-dependent hydrolysis of ester, thioester, amide, peptide and isopeptide bonds formed by the C-terminal Gly of ubiquitin (a 76-residue protein attached to proteins as an intracellular targeting signal).. Functionally, deubiquitinating enzyme that may play a role in the ubiquitin-dependent regulation of protein synthesis, downstream of mTORC1. May associate with the protein synthesis initiation complex and modify its ubiquitination to repress translation. May also repress DNA synthesis and modify different cellular targets thereby regulating cell growth and proliferation. May also play a role in proteasome assembly and function. In terms of biological role, stimulates protein synthesis. Influences the expression of CCND1/cyclin D1 by promoting its translation and regulates MYC/c-Myc protein stability. This is Deubiquitinase OTUD6B from Homo sapiens (Human).